The following is a 93-amino-acid chain: SH3 domain-binding glutamic acid-rich-like protein 3 (93 aa).

Ser-2 bears the N-acetylserine mark. In terms of domain architecture, Glutaredoxin spans 2-93; it reads SGLRVYSTSV…NTLQEFLKLA (92 aa). O-linked (GalNAc...) threonine glycosylation occurs at Thr-9.

Belongs to the SH3BGR family. As to quaternary structure, homodimer. Interacts with MYO1C (via its IQ motifs); the interaction is dependent on calcium and takes place at membrane ruffles. May be glycosylated.

Its subcellular location is the cytoplasm. It is found in the cytosol. The protein resides in the cell projection. It localises to the ruffle membrane. The protein localises to the nucleus. Could act as a modulator of glutaredoxin biological activity. May play a role in cytoskeleton organization. The protein is SH3 domain-binding glutamic acid-rich-like protein 3 (SH3BGRL3) of Bos taurus (Bovine).